Reading from the N-terminus, the 258-residue chain is Small ribosomal subunit protein uS2 (258 aa).

The disordered stretch occupies residues 227-258; that stretch reads GEQFAPASEQKEEVKTQEVQEVEDSNDDVIDD. A compositionally biased stretch (basic and acidic residues) spans 235–244; that stretch reads EQKEEVKTQE. A compositionally biased stretch (acidic residues) spans 246-258; that stretch reads QEVEDSNDDVIDD.

The protein belongs to the universal ribosomal protein uS2 family.

This is Small ribosomal subunit protein uS2 from Caldicellulosiruptor saccharolyticus (strain ATCC 43494 / DSM 8903 / Tp8T 6331).